A 1383-amino-acid chain; its full sequence is DNA-directed RNA polymerase subunit beta'' (1383 aa).

Positions 220, 289, 296, and 299 each coordinate Zn(2+).

Belongs to the RNA polymerase beta' chain family. RpoC2 subfamily. In terms of assembly, in plastids the minimal PEP RNA polymerase catalytic core is composed of four subunits: alpha, beta, beta', and beta''. When a (nuclear-encoded) sigma factor is associated with the core the holoenzyme is formed, which can initiate transcription. Requires Zn(2+) as cofactor.

Its subcellular location is the plastid. The protein resides in the chloroplast. It catalyses the reaction RNA(n) + a ribonucleoside 5'-triphosphate = RNA(n+1) + diphosphate. DNA-dependent RNA polymerase catalyzes the transcription of DNA into RNA using the four ribonucleoside triphosphates as substrates. The protein is DNA-directed RNA polymerase subunit beta'' of Oenothera elata subsp. hookeri (Hooker's evening primrose).